The chain runs to 451 residues: MKKEYFGTDGIRGTVGEPPITPDFMLHLGWAAGRVLARAGQSSVLVGKDTRISGYMLESALESGFAAAGVNVKLLGPMPTPAIAYLTRTLRAAAGVVISASHNPHEDNGIKFFSDDGEKLDDATELAIEAELRQPLKPAPSARLGKASRINDAPGRYIEFCKRSFPYELSLRGLRLVVDCANGATYHVAPAVFHELGAEVIPLADDPDGLNINADCGSLHPKGLQAAVREHDADAGIAFDGDGDRVIMVDHRGEVVDGDGLLYIIARQRMANGGLAGPVVGTVMSNLGLEQGIGRLGLPFLRAKVGDRYVMEMLRREGGILGGESSGHLICLDRTTTGDGIVSALQVLEAMAAQERTLAELADGMDRLPQIMVNVPISRGVPVQDHATVTDAVRDAETRLAGRGRVLLRPSGTEPVLRVMVEGPDQAEVSATAEAIAGAVREAHATLTAPR.

Catalysis depends on Ser-101, which acts as the Phosphoserine intermediate. Mg(2+) is bound by residues Ser-101, Asp-240, Asp-242, and Asp-244. The residue at position 101 (Ser-101) is a Phosphoserine.

It belongs to the phosphohexose mutase family. Mg(2+) serves as cofactor. Activated by phosphorylation.

It carries out the reaction alpha-D-glucosamine 1-phosphate = D-glucosamine 6-phosphate. Functionally, catalyzes the conversion of glucosamine-6-phosphate to glucosamine-1-phosphate. The chain is Phosphoglucosamine mutase from Alkalilimnicola ehrlichii (strain ATCC BAA-1101 / DSM 17681 / MLHE-1).